Consider the following 210-residue polypeptide: Thiamine-phosphate synthase (210 aa).

4-amino-2-methyl-5-(diphosphooxymethyl)pyrimidine is bound by residues 39-43 and Asn71; that span reads QLREK. Mg(2+) contacts are provided by Asp72 and Asp91. Residue Ser110 coordinates 4-amino-2-methyl-5-(diphosphooxymethyl)pyrimidine. 2-[(2R,5Z)-2-carboxy-4-methylthiazol-5(2H)-ylidene]ethyl phosphate is bound at residue 136–138; it reads TST. Residue Lys139 coordinates 4-amino-2-methyl-5-(diphosphooxymethyl)pyrimidine. 2-[(2R,5Z)-2-carboxy-4-methylthiazol-5(2H)-ylidene]ethyl phosphate is bound by residues Gly166 and 186 to 187; that span reads VS.

This sequence belongs to the thiamine-phosphate synthase family. Mg(2+) serves as cofactor.

It catalyses the reaction 2-[(2R,5Z)-2-carboxy-4-methylthiazol-5(2H)-ylidene]ethyl phosphate + 4-amino-2-methyl-5-(diphosphooxymethyl)pyrimidine + 2 H(+) = thiamine phosphate + CO2 + diphosphate. The enzyme catalyses 2-(2-carboxy-4-methylthiazol-5-yl)ethyl phosphate + 4-amino-2-methyl-5-(diphosphooxymethyl)pyrimidine + 2 H(+) = thiamine phosphate + CO2 + diphosphate. The catalysed reaction is 4-methyl-5-(2-phosphooxyethyl)-thiazole + 4-amino-2-methyl-5-(diphosphooxymethyl)pyrimidine + H(+) = thiamine phosphate + diphosphate. The protein operates within cofactor biosynthesis; thiamine diphosphate biosynthesis; thiamine phosphate from 4-amino-2-methyl-5-diphosphomethylpyrimidine and 4-methyl-5-(2-phosphoethyl)-thiazole: step 1/1. Its function is as follows. Condenses 4-methyl-5-(beta-hydroxyethyl)thiazole monophosphate (THZ-P) and 2-methyl-4-amino-5-hydroxymethyl pyrimidine pyrophosphate (HMP-PP) to form thiamine monophosphate (TMP). The sequence is that of Thiamine-phosphate synthase from Ruminiclostridium cellulolyticum (strain ATCC 35319 / DSM 5812 / JCM 6584 / H10) (Clostridium cellulolyticum).